The chain runs to 142 residues: Small ribosomal subunit protein uS12 (142 aa).

Positions 1–30 are disordered; that stretch reads MGKTRGMGAARKLKNHRRRQRWADKSYKKS. Positions 11-20 are enriched in basic residues; it reads RKLKNHRRRQ. Over residues 21-30 the composition is skewed to basic and acidic residues; that stretch reads RWADKSYKKS. A Hydroxyproline modification is found at P61.

Belongs to the universal ribosomal protein uS12 family.

This is Small ribosomal subunit protein uS12 (RPS23) from Fragaria ananassa (Strawberry).